A 436-amino-acid polypeptide reads, in one-letter code: T-box transcription factor TBX6 (436 aa).

Positions 100 to 273 (LWKEFSSVGT…ANPFAKGFRE (174 aa)) form a DNA-binding region, T-box. Residues 274 to 284 (NGRNCKRERDA) show a composition bias toward basic and acidic residues. Disordered regions lie at residues 274–339 (NGRN…APAP) and 360–379 (PSHL…SGRS). The span at 325 to 339 (EQAPAPGEATAAPAP) shows a compositional bias: low complexity.

Forms a dimeric complex with DNA (in vitro).

The protein localises to the nucleus. Functionally, T-box transcription factor that plays an essential role in the determination of the fate of axial stem cells: neural vs mesodermal. Acts in part by down-regulating, a specific enhancer (N1) of SOX2, to inhibit neural development. Seems to play also an essential role in left/right axis determination and acts through effects on Notch signaling around the node as well as through an effect on the morphology and motility of the nodal cilia. The protein is T-box transcription factor TBX6 (TBX6) of Gorilla gorilla gorilla (Western lowland gorilla).